Reading from the N-terminus, the 554-residue chain is Valerianol synthase TPS1A (554 aa).

Mg(2+) is bound by residues Asp307 and Asp311. Positions 326–330 (VQRWD) match the DDXXD motif motif. Positions 452, 456, and 460 each coordinate Mg(2+).

Belongs to the terpene synthase family. The cofactor is Mg(2+). In terms of tissue distribution, expressed in flowers.

The enzyme catalyses (2E,6E)-farnesyl diphosphate + H2O = valerianol + diphosphate. The protein operates within secondary metabolite biosynthesis; terpenoid biosynthesis. Terpene synthase that catalyzes the biosynthesis of the terpene valerianol, which is a volatile compound of floral scent. This Camellia hiemalis (Camellia) protein is Valerianol synthase TPS1A.